Here is a 338-residue protein sequence, read N- to C-terminus: Ketol-acid reductoisomerase (NADP(+)) (338 aa).

Residues 1–181 (MKVFYDKDAD…GGGRAGIIET (181 aa)) enclose the KARI N-terminal Rossmann domain. NADP(+) is bound by residues 24–27 (YGSQ), Arg-47, and Ser-52. His-107 is a catalytic residue. Gly-133 contacts NADP(+). One can recognise a KARI C-terminal knotted domain in the interval 182 to 327 (NFREETETDL…EKLRAMMPWI (146 aa)). Mg(2+) contacts are provided by Asp-190, Glu-194, Glu-226, and Glu-230. Position 251 (Ser-251) interacts with substrate.

The protein belongs to the ketol-acid reductoisomerase family. Requires Mg(2+) as cofactor.

The catalysed reaction is (2R)-2,3-dihydroxy-3-methylbutanoate + NADP(+) = (2S)-2-acetolactate + NADPH + H(+). The enzyme catalyses (2R,3R)-2,3-dihydroxy-3-methylpentanoate + NADP(+) = (S)-2-ethyl-2-hydroxy-3-oxobutanoate + NADPH + H(+). The protein operates within amino-acid biosynthesis; L-isoleucine biosynthesis; L-isoleucine from 2-oxobutanoate: step 2/4. It participates in amino-acid biosynthesis; L-valine biosynthesis; L-valine from pyruvate: step 2/4. In terms of biological role, involved in the biosynthesis of branched-chain amino acids (BCAA). Catalyzes an alkyl-migration followed by a ketol-acid reduction of (S)-2-acetolactate (S2AL) to yield (R)-2,3-dihydroxy-isovalerate. In the isomerase reaction, S2AL is rearranged via a Mg-dependent methyl migration to produce 3-hydroxy-3-methyl-2-ketobutyrate (HMKB). In the reductase reaction, this 2-ketoacid undergoes a metal-dependent reduction by NADPH to yield (R)-2,3-dihydroxy-isovalerate. The protein is Ketol-acid reductoisomerase (NADP(+)) of Cupriavidus taiwanensis (strain DSM 17343 / BCRC 17206 / CCUG 44338 / CIP 107171 / LMG 19424 / R1) (Ralstonia taiwanensis (strain LMG 19424)).